Consider the following 300-residue polypeptide: Transcription termination/antitermination protein NusG (300 aa).

The segment at 1–99 is disordered; that stretch reads MSDPNVNDAI…EAEEPELDPI (99 aa). Acidic residues-rich tracts occupy residues 14–41 and 47–97; these read ESVEDELGTVEGADNEDTEASAEAEAAD and ETDE…PELD.

The protein belongs to the NusG family.

Its function is as follows. Participates in transcription elongation, termination and antitermination. This is Transcription termination/antitermination protein NusG from Streptomyces coelicolor (strain ATCC BAA-471 / A3(2) / M145).